Here is a 72-residue protein sequence, read N- to C-terminus: Translation initiation factor IF-1 (72 aa).

Residues 1–72 (MAKDDVIEVE…TRGRITYRFK (72 aa)) enclose the S1-like domain.

This sequence belongs to the IF-1 family. In terms of assembly, component of the 30S ribosomal translation pre-initiation complex which assembles on the 30S ribosome in the order IF-2 and IF-3, IF-1 and N-formylmethionyl-tRNA(fMet); mRNA recruitment can occur at any time during PIC assembly.

Its subcellular location is the cytoplasm. Functionally, one of the essential components for the initiation of protein synthesis. Stabilizes the binding of IF-2 and IF-3 on the 30S subunit to which N-formylmethionyl-tRNA(fMet) subsequently binds. Helps modulate mRNA selection, yielding the 30S pre-initiation complex (PIC). Upon addition of the 50S ribosomal subunit IF-1, IF-2 and IF-3 are released leaving the mature 70S translation initiation complex. This is Translation initiation factor IF-1 from Streptococcus pneumoniae serotype 2 (strain D39 / NCTC 7466).